The primary structure comprises 466 residues: Phosphomethylpyrimidine synthase (466 aa).

Substrate contacts are provided by residues Asn80, Met109, Tyr139, His175, 195 to 197 (SRG), 236 to 239 (DSLR), and Glu275. His279 is a binding site for Zn(2+). Tyr302 serves as a coordination point for substrate. His343 is a Zn(2+) binding site. [4Fe-4S] cluster contacts are provided by Cys423, Cys426, and Cys431.

It belongs to the ThiC family. [4Fe-4S] cluster serves as cofactor.

It catalyses the reaction 5-amino-1-(5-phospho-beta-D-ribosyl)imidazole + S-adenosyl-L-methionine = 4-amino-2-methyl-5-(phosphooxymethyl)pyrimidine + CO + 5'-deoxyadenosine + formate + L-methionine + 3 H(+). It participates in cofactor biosynthesis; thiamine diphosphate biosynthesis. Its function is as follows. Catalyzes the synthesis of the hydroxymethylpyrimidine phosphate (HMP-P) moiety of thiamine from aminoimidazole ribotide (AIR) in a radical S-adenosyl-L-methionine (SAM)-dependent reaction. This Prochlorococcus marinus (strain NATL2A) protein is Phosphomethylpyrimidine synthase.